Reading from the N-terminus, the 309-residue chain is Ornithine carbamoyltransferase (309 aa).

Carbamoyl phosphate is bound by residues 51–54 (STRT), Gln-78, Arg-102, and 129–132 (HPVQ). L-ornithine is bound by residues Asn-159, Asp-223, and 227–228 (SM). Residues 263–264 (CL) and Arg-291 contribute to the carbamoyl phosphate site.

Belongs to the aspartate/ornithine carbamoyltransferase superfamily. OTCase family.

It is found in the cytoplasm. The catalysed reaction is carbamoyl phosphate + L-ornithine = L-citrulline + phosphate + H(+). Its pathway is amino-acid biosynthesis; L-arginine biosynthesis; L-arginine from L-ornithine and carbamoyl phosphate: step 1/3. In terms of biological role, reversibly catalyzes the transfer of the carbamoyl group from carbamoyl phosphate (CP) to the N(epsilon) atom of ornithine (ORN) to produce L-citrulline. In Nitratiruptor sp. (strain SB155-2), this protein is Ornithine carbamoyltransferase.